Reading from the N-terminus, the 97-residue chain is Co-chaperonin GroES (97 aa).

Belongs to the GroES chaperonin family. As to quaternary structure, heptamer of 7 subunits arranged in a ring. Interacts with the chaperonin GroEL.

It localises to the cytoplasm. Together with the chaperonin GroEL, plays an essential role in assisting protein folding. The GroEL-GroES system forms a nano-cage that allows encapsulation of the non-native substrate proteins and provides a physical environment optimized to promote and accelerate protein folding. GroES binds to the apical surface of the GroEL ring, thereby capping the opening of the GroEL channel. This Baumannia cicadellinicola subsp. Homalodisca coagulata protein is Co-chaperonin GroES.